The following is a 656-amino-acid chain: MSEQNPTDSKNPELKKHTFEAEVAQLLHLVTHSLYSNSDIFVRELVSNASDACDKLRFEATNDDSLYEDDGELRIRIAVDEDAKTITFTDNGIGMNEADAIENLGTIAKSGTKAFLDKLSDSQKQDGQLIGQFGVGFYSGFIVADTISVETRKAGDAAENGVRWVSDGTGSFTVENISKTERGSSITLHLKEQYSEGEDGYLDRSKIKRLVNKYSDHISLPIQMRKEIWQEDEVEEGDDTPANGQMVLTDEWETINKASALWTRTASDVEDDEYVDFYKNITYDMDAPLTWTHNRVEGRVQYTQLLYIPKKAPVDLYTREQQHGLKLYVKRVFIMDDAEQLLPMYLRFVKGVIDSADLPLNVSREILQESRDVKSIRDGNARRILTLLASLANSEDADKQEKFAQFYAEFGDVIKEGVGEDMGNQERIAKLLRYATSTQDGEMTSFEDYKARMKDGQKAIYYLTADNLAAAKNSPQLELFKKKGIEVILMTSRVDEWAMNFLTSFDETPLQNIAKGAVDLGDLQDEAEKAEAEKAQETMKPVVDKLKAALGDRAKDVKVSTRLVDSPACLVVGEGELSPQMIQMLKQMGQDVPESKPTLEVNPDHPLIKKLESSEQSAEDFDKLAQVIFDQALLADGGQLEDPAAYLRRVNELLMK.

The interval 1–364 is a; substrate-binding; the sequence is MSEQNPTDSK…SADLPLNVSR (364 aa). The segment at 365–583 is b; sequence EILQESRDVK…EGELSPQMIQ (219 aa). The interval 584–656 is c; sequence MLKQMGQDVP…LRRVNELLMK (73 aa).

The protein belongs to the heat shock protein 90 family. In terms of assembly, homodimer.

The protein localises to the cytoplasm. Functionally, molecular chaperone. Has ATPase activity. The chain is Chaperone protein HtpG from Psychrobacter arcticus (strain DSM 17307 / VKM B-2377 / 273-4).